Reading from the N-terminus, the 48-residue chain is uncharacterized protein (48 aa).

This is an uncharacterized protein from Acidianus convivator (ATV).